Reading from the N-terminus, the 178-residue chain is Protein GrpE (178 aa).

Residues 1–11 (MADELSEKSVE) are compositionally biased toward basic and acidic residues. Residues 1-32 (MADELSEKSVEGTEEDGESAPAEGTTEGVPVD) form a disordered region.

The protein belongs to the GrpE family. As to quaternary structure, homodimer.

The protein localises to the cytoplasm. Functionally, participates actively in the response to hyperosmotic and heat shock by preventing the aggregation of stress-denatured proteins, in association with DnaK and GrpE. It is the nucleotide exchange factor for DnaK and may function as a thermosensor. Unfolded proteins bind initially to DnaJ; upon interaction with the DnaJ-bound protein, DnaK hydrolyzes its bound ATP, resulting in the formation of a stable complex. GrpE releases ADP from DnaK; ATP binding to DnaK triggers the release of the substrate protein, thus completing the reaction cycle. Several rounds of ATP-dependent interactions between DnaJ, DnaK and GrpE are required for fully efficient folding. The protein is Protein GrpE of Methanothrix thermoacetophila (strain DSM 6194 / JCM 14653 / NBRC 101360 / PT) (Methanosaeta thermophila).